Reading from the N-terminus, the 249-residue chain is 1-(5-phosphoribosyl)-5-[(5-phosphoribosylamino)methylideneamino] imidazole-4-carboxamide isomerase (249 aa).

The active-site Proton acceptor is D8. Residue D131 is the Proton donor of the active site.

The protein belongs to the HisA/HisF family.

Its subcellular location is the cytoplasm. It catalyses the reaction 1-(5-phospho-beta-D-ribosyl)-5-[(5-phospho-beta-D-ribosylamino)methylideneamino]imidazole-4-carboxamide = 5-[(5-phospho-1-deoxy-D-ribulos-1-ylimino)methylamino]-1-(5-phospho-beta-D-ribosyl)imidazole-4-carboxamide. Its pathway is amino-acid biosynthesis; L-histidine biosynthesis; L-histidine from 5-phospho-alpha-D-ribose 1-diphosphate: step 4/9. The polypeptide is 1-(5-phosphoribosyl)-5-[(5-phosphoribosylamino)methylideneamino] imidazole-4-carboxamide isomerase (Leptothrix cholodnii (strain ATCC 51168 / LMG 8142 / SP-6) (Leptothrix discophora (strain SP-6))).